A 124-amino-acid polypeptide reads, in one-letter code: Ribonuclease pancreatic (124 aa).

Residues 1-13 (KETAAAKFERQHI) show a composition bias toward basic and acidic residues. Residues 1–24 (KETAAAKFERQHIDSNPSSVSSSN) are disordered. Substrate is bound by residues lysine 7 and arginine 10. The Proton acceptor role is filled by histidine 12. The segment covering 15–24 (SNPSSVSSSN) has biased composition (low complexity). 4 disulfide bridges follow: cysteine 26/cysteine 84, cysteine 40/cysteine 95, cysteine 58/cysteine 110, and cysteine 65/cysteine 72. An N-linked (GlcNAc...) asparagine; partial glycan is attached at asparagine 34. Substrate contacts are provided by residues 41–45 (KPVNT), lysine 66, and arginine 85. Histidine 119 serves as the catalytic Proton donor.

Belongs to the pancreatic ribonuclease family. As to quaternary structure, monomer. Interacts with and forms tight 1:1 complexes with RNH1. Dimerization of two such complexes may occur. Interaction with RNH1 inhibits this protein. Pancreas.

It is found in the secreted. It catalyses the reaction an [RNA] containing cytidine + H2O = an [RNA]-3'-cytidine-3'-phosphate + a 5'-hydroxy-ribonucleotide-3'-[RNA].. The catalysed reaction is an [RNA] containing uridine + H2O = an [RNA]-3'-uridine-3'-phosphate + a 5'-hydroxy-ribonucleotide-3'-[RNA].. Its function is as follows. Endonuclease that catalyzes the cleavage of RNA on the 3' side of pyrimidine nucleotides. Acts on single-stranded and double-stranded RNA. This is Ribonuclease pancreatic (RNASE1) from Antilocapra americana (Pronghorn).